A 143-amino-acid polypeptide reads, in one-letter code: MANAASGMAVHDDCKLKFLELKAKRTYRFIIYKIEEKQKEVVVEKLGEPTESYEDFTAGLPADECRYAVYDFDFMTKENHQKSRIFFIAWSPDTARVRSKMIYASSKDRFKRELDGIQVELQATDPTEMGLDVFRSRAGGIEC.

An ADF-H domain is found at A5–G139.

This sequence belongs to the actin-binding proteins ADF family.

Functionally, actin-depolymerizing protein. Severs actin filaments (F-actin) and binds to actin monomers. This is Actin-depolymerizing factor 2 (ADF2) from Petunia hybrida (Petunia).